We begin with the raw amino-acid sequence, 973 residues long: Probable outer membrane protein pmp13 (973 aa).

The signal sequence occupies residues 1-24; that stretch reads MKTSIRKFLISTTLAPCFASTAFT. A compositionally biased stretch (polar residues) spans 284–293; sequence QNNTASPQNS. Residues 284 to 303 are disordered; that stretch reads QNNTASPQNSLPAPTPPPTP. The 283-residue stretch at 691-973 folds into the Autotransporter domain; it reads EDVPGKQLSI…TLDIGSKLRF (283 aa).

Belongs to the PMP outer membrane protein family.

It localises to the secreted. It is found in the cell wall. The protein resides in the cell outer membrane. The chain is Probable outer membrane protein pmp13 (pmp13) from Chlamydia pneumoniae (Chlamydophila pneumoniae).